Reading from the N-terminus, the 351-residue chain is DNA polymerase IV (351 aa).

The UmuC domain occupies 4-185 (IIHVDMDCFF…LPLAKIPGVG (182 aa)). Mg(2+)-binding residues include Asp8 and Asp103. Glu104 is an active-site residue.

The protein belongs to the DNA polymerase type-Y family. Monomer. Mg(2+) serves as cofactor.

The protein resides in the cytoplasm. It carries out the reaction DNA(n) + a 2'-deoxyribonucleoside 5'-triphosphate = DNA(n+1) + diphosphate. Poorly processive, error-prone DNA polymerase involved in untargeted mutagenesis. Copies undamaged DNA at stalled replication forks, which arise in vivo from mismatched or misaligned primer ends. These misaligned primers can be extended by PolIV. Exhibits no 3'-5' exonuclease (proofreading) activity. May be involved in translesional synthesis, in conjunction with the beta clamp from PolIII. The protein is DNA polymerase IV of Escherichia coli (strain ATCC 8739 / DSM 1576 / NBRC 3972 / NCIMB 8545 / WDCM 00012 / Crooks).